The following is a 476-amino-acid chain: Bifunctional protein HldE (476 aa).

Positions 1–318 (MFQYSAEFKQ…ENAIHGRSNT (318 aa)) are ribokinase. 195-198 (NMSE) provides a ligand contact to ATP. The active site involves aspartate 264. The tract at residues 344 to 476 (MTNGCFDILH…VISKIQQLKD (133 aa)) is cytidylyltransferase.

It in the N-terminal section; belongs to the carbohydrate kinase PfkB family. This sequence in the C-terminal section; belongs to the cytidylyltransferase family. In terms of assembly, homodimer.

The catalysed reaction is D-glycero-beta-D-manno-heptose 7-phosphate + ATP = D-glycero-beta-D-manno-heptose 1,7-bisphosphate + ADP + H(+). It catalyses the reaction D-glycero-beta-D-manno-heptose 1-phosphate + ATP + H(+) = ADP-D-glycero-beta-D-manno-heptose + diphosphate. Its pathway is nucleotide-sugar biosynthesis; ADP-L-glycero-beta-D-manno-heptose biosynthesis; ADP-L-glycero-beta-D-manno-heptose from D-glycero-beta-D-manno-heptose 7-phosphate: step 1/4. It participates in nucleotide-sugar biosynthesis; ADP-L-glycero-beta-D-manno-heptose biosynthesis; ADP-L-glycero-beta-D-manno-heptose from D-glycero-beta-D-manno-heptose 7-phosphate: step 3/4. The protein operates within bacterial outer membrane biogenesis; LPS core biosynthesis. Catalyzes the phosphorylation of D-glycero-D-manno-heptose 7-phosphate at the C-1 position to selectively form D-glycero-beta-D-manno-heptose-1,7-bisphosphate. Its function is as follows. Catalyzes the ADP transfer from ATP to D-glycero-beta-D-manno-heptose 1-phosphate, yielding ADP-D-glycero-beta-D-manno-heptose. This is Bifunctional protein HldE from Pasteurella multocida (strain Pm70).